The following is a 375-amino-acid chain: Succinyl-diaminopimelate desuccinylase (375 aa).

Histidine 66 contributes to the Zn(2+) binding site. Aspartate 68 is an active-site residue. Position 99 (aspartate 99) interacts with Zn(2+). Glutamate 133 serves as the catalytic Proton acceptor. 3 residues coordinate Zn(2+): glutamate 134, glutamate 162, and histidine 348.

Belongs to the peptidase M20A family. DapE subfamily. Homodimer. Zn(2+) serves as cofactor. It depends on Co(2+) as a cofactor.

The catalysed reaction is N-succinyl-(2S,6S)-2,6-diaminopimelate + H2O = (2S,6S)-2,6-diaminopimelate + succinate. The protein operates within amino-acid biosynthesis; L-lysine biosynthesis via DAP pathway; LL-2,6-diaminopimelate from (S)-tetrahydrodipicolinate (succinylase route): step 3/3. Functionally, catalyzes the hydrolysis of N-succinyl-L,L-diaminopimelic acid (SDAP), forming succinate and LL-2,6-diaminopimelate (DAP), an intermediate involved in the bacterial biosynthesis of lysine and meso-diaminopimelic acid, an essential component of bacterial cell walls. In Shigella dysenteriae serotype 1 (strain Sd197), this protein is Succinyl-diaminopimelate desuccinylase.